The chain runs to 81 residues: UPF0181 protein Spro_2806 (81 aa).

The disordered stretch occupies residues glutamate 43–tyrosine 81. 2 stretches are compositionally biased toward acidic residues: residues phenylalanine 54 to tyrosine 63 and glutamine 70 to tyrosine 81.

Belongs to the UPF0181 family.

The polypeptide is UPF0181 protein Spro_2806 (Serratia proteamaculans (strain 568)).